A 31-amino-acid chain; its full sequence is U8-ctenitoxin-Co1a (31 aa).

2 disulfides stabilise this stretch: Cys4/Cys18 and Cys11/Cys24.

As to expression, expressed by the venom gland.

The protein resides in the secreted. Blocks voltage-gated sodium channels (Nav). This is U8-ctenitoxin-Co1a from Ctenus ornatus (Brazilian spider).